A 392-amino-acid polypeptide reads, in one-letter code: Selenide, water dikinase 1 (392 aa).

The active site involves Cys31. Residues Lys32, 67-69 (GMD), Asp87, Asp110, and 161-164 (GGQT) each bind ATP. Asp69 contributes to the Mg(2+) binding site. Asp110 lines the Mg(2+) pocket. Asp265 is a Mg(2+) binding site.

This sequence belongs to the selenophosphate synthase 1 family. Class II subfamily. In terms of assembly, homodimer. Requires Mg(2+) as cofactor.

It localises to the cell membrane. It is found in the nucleus membrane. It carries out the reaction hydrogenselenide + ATP + H2O = selenophosphate + AMP + phosphate + 2 H(+). In terms of biological role, synthesizes selenophosphate from selenide and ATP. This Xenopus tropicalis (Western clawed frog) protein is Selenide, water dikinase 1 (sephs1).